Here is a 178-residue protein sequence, read N- to C-terminus: Large ribosomal subunit protein bL25 (178 aa).

Belongs to the bacterial ribosomal protein bL25 family. CTC subfamily. In terms of assembly, part of the 50S ribosomal subunit; part of the 5S rRNA/L5/L18/L25 subcomplex. Contacts the 5S rRNA. Binds to the 5S rRNA independently of L5 and L18.

Functionally, this is one of the proteins that binds to the 5S RNA in the ribosome where it forms part of the central protuberance. The protein is Large ribosomal subunit protein bL25 of Campylobacter jejuni subsp. jejuni serotype O:23/36 (strain 81-176).